The chain runs to 271 residues: Isoprenyl transferase (271 aa).

Residue D35 is part of the active site. D35 serves as a coordination point for Mg(2+). Residues 36-39 (GNGR), W40, R48, H52, and 80-82 (STE) contribute to the substrate site. N83 functions as the Proton acceptor in the catalytic mechanism. Residues W84, R86, R207, and 213 to 215 (RIS) contribute to the substrate site. E226 contacts Mg(2+).

Belongs to the UPP synthase family. Homodimer. The cofactor is Mg(2+).

Its function is as follows. Catalyzes the condensation of isopentenyl diphosphate (IPP) with allylic pyrophosphates generating different type of terpenoids. The polypeptide is Isoprenyl transferase (Enterococcus faecalis (strain ATCC 700802 / V583)).